The following is a 567-amino-acid chain: Proline--tRNA ligase (567 aa).

This sequence belongs to the class-II aminoacyl-tRNA synthetase family. ProS type 1 subfamily. Homodimer.

Its subcellular location is the cytoplasm. The enzyme catalyses tRNA(Pro) + L-proline + ATP = L-prolyl-tRNA(Pro) + AMP + diphosphate. In terms of biological role, catalyzes the attachment of proline to tRNA(Pro) in a two-step reaction: proline is first activated by ATP to form Pro-AMP and then transferred to the acceptor end of tRNA(Pro). As ProRS can inadvertently accommodate and process non-cognate amino acids such as alanine and cysteine, to avoid such errors it has two additional distinct editing activities against alanine. One activity is designated as 'pretransfer' editing and involves the tRNA(Pro)-independent hydrolysis of activated Ala-AMP. The other activity is designated 'posttransfer' editing and involves deacylation of mischarged Ala-tRNA(Pro). The misacylated Cys-tRNA(Pro) is not edited by ProRS. The polypeptide is Proline--tRNA ligase (Campylobacter fetus subsp. fetus (strain 82-40)).